Reading from the N-terminus, the 41-residue chain is Photosystem I reaction center subunit IX (41 aa).

Residues Tyr7–Ile27 form a helical membrane-spanning segment.

It belongs to the PsaJ family.

The protein localises to the plastid. It is found in the chloroplast thylakoid membrane. Its function is as follows. May help in the organization of the PsaE and PsaF subunits. The chain is Photosystem I reaction center subunit IX from Pleurastrum terricola (Filamentous green alga).